Here is a 247-residue protein sequence, read N- to C-terminus: Transmembrane protein 33 (247 aa).

At A2 the chain carries N-acetylalanine. The Lumenal segment spans residues 2–31; the sequence is ADTTPNGPQGAGAVQFMMTNKLDTAMWLSR. Residues 32-52 traverse the membrane as a helical segment; it reads LFTVYCSALFVLPLLGLHEAA. The Cytoplasmic segment spans residues 53-100; the sequence is SFYQRALLANALTSALRLHQRLPHFQLSRAFLAQALLEDSCHYLLYSL. Residues 101–121 traverse the membrane as a helical segment; it reads IFVNSYPVTMSIFPVLLFSLL. The Lumenal portion of the chain corresponds to 122–155; that stretch reads HAATYTKKVLDARGSNSLPLLRSVLDKLSANQQN. A helical membrane pass occupies residues 156–176; that stretch reads ILKFIACNEIFLMPATVFMLF. The Cytoplasmic portion of the chain corresponds to 177-247; sequence SGQGSLLQPF…FISRLAPTVP (71 aa).

This sequence belongs to the PER33/POM33 family. In terms of assembly, interacts with EIF2AK3. Interacts with ARL6IP1, isoform RTN1-A of RTN1, isoform RTN2-B of RTN2, isoform 3 of RTN3 and isoform 3 of RTN4. Interacts with RNF5. Interacts with RNF26. Interacts with PKD2. As to expression, prostate cancer and several cancer cell lines (at protein level). Widely expressed. Expressed at higher levels in endocrine-resistant breast cancer cells as compared to endocrine-sensitive breast cancer cells. Expressed at higher levels in early recurrence breast cancer tissues as compared to non-recurrent breast tumors.

It is found in the endoplasmic reticulum membrane. Its subcellular location is the melanosome. The protein resides in the nucleus envelope. In terms of biological role, acts as a regulator of the tubular endoplasmic reticulum (ER) network by modulating intracellular calcium homeostasis. Mechanistically, stimulates PKD2 calcium-dependent activity. Suppresses the RTN3/4-induced formation of the ER tubules. Positively regulates PERK-mediated and IRE1-mediated unfolded protein response signaling. Plays an essential role in VEGF-mediated release of Ca(2+) from ER stores during angiogenesis. Also plays a role in the modulation of innate immune signaling through the cGAS-STING pathway by interacting with RNF26. Participates in lipid metabolism by acting as a downstream effector of the pyruvate kinase/PKM. Forms a complex with RNF5 to facilitate polyubiquitination and subsequent degradation of SCAP on the ER membrane. The protein is Transmembrane protein 33 (TMEM33) of Homo sapiens (Human).